The sequence spans 378 residues: Acetylornithine deacetylase (378 aa).

Zn(2+) is bound at residue His76. Asp78 is a catalytic residue. Asp108 contacts Zn(2+). The active site involves Glu140. Zn(2+)-binding residues include Glu141, Glu165, and His351.

The protein belongs to the peptidase M20A family. ArgE subfamily. As to quaternary structure, homodimer. Zn(2+) is required as a cofactor. Co(2+) serves as cofactor. Requires glutathione as cofactor.

The protein localises to the cytoplasm. It carries out the reaction N(2)-acetyl-L-ornithine + H2O = L-ornithine + acetate. Its pathway is amino-acid biosynthesis; L-arginine biosynthesis; L-ornithine from N(2)-acetyl-L-ornithine (linear): step 1/1. Its function is as follows. Catalyzes the hydrolysis of the amide bond of N(2)-acetylated L-amino acids. Cleaves the acetyl group from N-acetyl-L-ornithine to form L-ornithine, an intermediate in L-arginine biosynthesis pathway, and a branchpoint in the synthesis of polyamines. This Vibrio campbellii (strain ATCC BAA-1116) protein is Acetylornithine deacetylase.